The chain runs to 995 residues: DExH-box ATP-dependent RNA helicase DExH1 (995 aa).

2 disordered regions span residues 1-42 (MPPH…EQRW) and 156-192 (KTTQ…ASKL). A compositionally biased stretch (gly residues) spans 25–37 (RGGGGRGGGGGGR). The segment covering 161-170 (SGSSGASASA) has biased composition (low complexity). Residues 171–181 (FNDQQDRTSTL) show a composition bias toward polar residues. One can recognise a Helicase ATP-binding domain in the interval 238 to 405 (LNSVSQNQVL…FGNSPTMHIP (168 aa)). ATP is bound at residue 251–258 (GETGCGKT). The DEIH box signature appears at 352-355 (DEIH). The segment at 429 to 450 (SSDSGNYQGSSRGRRRESESKK) is disordered. In terms of domain architecture, Helicase C-terminal spans 484-663 (QIDVDLVEAT…ELCLHIKSLQ (180 aa)).

The protein belongs to the DExH box helicase family.

The enzyme catalyses ATP + H2O = ADP + phosphate + H(+). This is DExH-box ATP-dependent RNA helicase DExH1 from Arabidopsis thaliana (Mouse-ear cress).